The chain runs to 174 residues: uncharacterized protein (174 aa).

2 helical membrane-spanning segments follow: residues 29 to 51 (FAVELIPAINYFIFVGLCFGFWY) and 66 to 83 (VIVIFGIPFFLTMLVTKI).

Its subcellular location is the cell membrane. This is an uncharacterized protein from Bacillus subtilis (strain 168).